A 143-amino-acid polypeptide reads, in one-letter code: MELRYLRYFVAVARERHFTRAAKALGISQPPLSQQIKRLEEEVGTPLFRRLTRGVELTEAGEAFYEDACKILALSDAALEKARGIARGLNGNLSIGITSSDAFHPKIFALIRQFQVQNMAVQVHQVEANMSSLTAMLAEGELD.

The HTH lysR-type domain maps to 1-58; that stretch reads MELRYLRYFVAVARERHFTRAAKALGISQPPLSQQIKRLEEEVGTPLFRRLTRGVELT. Positions 18-37 form a DNA-binding region, H-T-H motif; the sequence is FTRAAKALGISQPPLSQQIK.

This sequence belongs to the LysR transcriptional regulatory family.

Regulator of the budABC operon for 2,3-butanediol synthesis. The chain is HTH-type transcriptional regulator BudR (budR) from Klebsiella aerogenes (Enterobacter aerogenes).